Reading from the N-terminus, the 179-residue chain is tRNA (cytidine(56)-2'-O)-methyltransferase (179 aa).

Residues leucine 82, 112-116, and 130-137 contribute to the S-adenosyl-L-methionine site; these read GAEKV and VGNQPHSE.

Belongs to the aTrm56 family. In terms of assembly, homodimer.

The protein resides in the cytoplasm. The catalysed reaction is cytidine(56) in tRNA + S-adenosyl-L-methionine = 2'-O-methylcytidine(56) in tRNA + S-adenosyl-L-homocysteine + H(+). Its function is as follows. Specifically catalyzes the AdoMet-dependent 2'-O-ribose methylation of cytidine at position 56 in tRNAs. The sequence is that of tRNA (cytidine(56)-2'-O)-methyltransferase from Methanococcus maripaludis (strain C6 / ATCC BAA-1332).